Here is a 348-residue protein sequence, read N- to C-terminus: UDP-3-O-acylglucosamine N-acyltransferase (348 aa).

The active-site Proton acceptor is histidine 248.

Belongs to the transferase hexapeptide repeat family. LpxD subfamily. As to quaternary structure, homotrimer.

It carries out the reaction a UDP-3-O-[(3R)-3-hydroxyacyl]-alpha-D-glucosamine + a (3R)-hydroxyacyl-[ACP] = a UDP-2-N,3-O-bis[(3R)-3-hydroxyacyl]-alpha-D-glucosamine + holo-[ACP] + H(+). The protein operates within bacterial outer membrane biogenesis; LPS lipid A biosynthesis. Catalyzes the N-acylation of UDP-3-O-acylglucosamine using 3-hydroxyacyl-ACP as the acyl donor. Is involved in the biosynthesis of lipid A, a phosphorylated glycolipid that anchors the lipopolysaccharide to the outer membrane of the cell. The sequence is that of UDP-3-O-acylglucosamine N-acyltransferase from Rippkaea orientalis (strain PCC 8801 / RF-1) (Cyanothece sp. (strain PCC 8801)).